Reading from the N-terminus, the 502-residue chain is UPF0371 protein CTC_00401 (502 aa).

It belongs to the UPF0371 family.

The sequence is that of UPF0371 protein CTC_00401 from Clostridium tetani (strain Massachusetts / E88).